Consider the following 160-residue polypeptide: SsrA-binding protein (160 aa).

The disordered stretch occupies residues 130-160 (LAKGKKKHDKRADQKEQDWQRQKQRLMKHKV). Positions 139 to 150 (KRADQKEQDWQR) are enriched in basic and acidic residues. Residues 151-160 (QKQRLMKHKV) are compositionally biased toward basic residues.

Belongs to the SmpB family.

The protein localises to the cytoplasm. In terms of biological role, required for rescue of stalled ribosomes mediated by trans-translation. Binds to transfer-messenger RNA (tmRNA), required for stable association of tmRNA with ribosomes. tmRNA and SmpB together mimic tRNA shape, replacing the anticodon stem-loop with SmpB. tmRNA is encoded by the ssrA gene; the 2 termini fold to resemble tRNA(Ala) and it encodes a 'tag peptide', a short internal open reading frame. During trans-translation Ala-aminoacylated tmRNA acts like a tRNA, entering the A-site of stalled ribosomes, displacing the stalled mRNA. The ribosome then switches to translate the ORF on the tmRNA; the nascent peptide is terminated with the 'tag peptide' encoded by the tmRNA and targeted for degradation. The ribosome is freed to recommence translation, which seems to be the essential function of trans-translation. The protein is SsrA-binding protein of Alkalilimnicola ehrlichii (strain ATCC BAA-1101 / DSM 17681 / MLHE-1).